The sequence spans 153 residues: NADPH-dependent 7-cyano-7-deazaguanine reductase (153 aa).

A disordered region spans residues 1-30 (MDSIETHAKQLGQQTPLPASPEAAQLDRVP). Cys51 serves as the catalytic Thioimide intermediate. Asp58 functions as the Proton donor in the catalytic mechanism. Substrate is bound by residues 73–75 (VES) and 92–93 (HE).

It belongs to the GTP cyclohydrolase I family. QueF type 1 subfamily.

It localises to the cytoplasm. It carries out the reaction 7-aminomethyl-7-carbaguanine + 2 NADP(+) = 7-cyano-7-deazaguanine + 2 NADPH + 3 H(+). The protein operates within tRNA modification; tRNA-queuosine biosynthesis. Catalyzes the NADPH-dependent reduction of 7-cyano-7-deazaguanine (preQ0) to 7-aminomethyl-7-deazaguanine (preQ1). The polypeptide is NADPH-dependent 7-cyano-7-deazaguanine reductase (Methylorubrum extorquens (strain CM4 / NCIMB 13688) (Methylobacterium extorquens)).